The chain runs to 667 residues: Probable potassium transport system protein Kup (667 aa).

The next 12 helical transmembrane spans lie at 5–25 (GLLIAIGIVYGDIGTSPLYVM), 47–67 (ISLILWTVTLLTTVQTVIIAL), 88–108 (AAWLVWPALIGGAAILADGTL), 133–153 (VSNQTTVLVITIVILLVLFSI), 164–184 (AFGPIMLVWFAFLGVMGLINI), 210–230 (AGFAILGSIFLATTGAEALYS), 243–263 (SWPFVFVCLSLNYFGQGVWIL), 287–307 (LASIVLATLAAIIASQALITG), 336–356 (IYIPAVNKMLGITTIALVLFF), 367–387 (GLSITISMLTTTILLYEWLVL), 393–413 (LANLLFVIFFSTINILFMGSS), and 420–440 (GGYVSLLITLLIASVMVVWYF).

It belongs to the HAK/KUP transporter (TC 2.A.72) family.

Its subcellular location is the cell membrane. It carries out the reaction K(+)(in) + H(+)(in) = K(+)(out) + H(+)(out). In terms of biological role, transport of potassium into the cell. Likely operates as a K(+):H(+) symporter. The protein is Probable potassium transport system protein Kup of Lactobacillus delbrueckii subsp. bulgaricus (strain ATCC 11842 / DSM 20081 / BCRC 10696 / JCM 1002 / NBRC 13953 / NCIMB 11778 / NCTC 12712 / WDCM 00102 / Lb 14).